The sequence spans 441 residues: Xaa-Pro dipeptidase (441 aa).

The Mn(2+) site is built by Asp244, Asp255, His336, Glu381, and Glu420.

It belongs to the peptidase M24B family. Bacterial-type prolidase subfamily. Requires Mn(2+) as cofactor.

It carries out the reaction Xaa-L-Pro dipeptide + H2O = an L-alpha-amino acid + L-proline. Functionally, splits dipeptides with a prolyl residue in the C-terminal position. The protein is Xaa-Pro dipeptidase of Xanthomonas axonopodis pv. citri (strain 306).